We begin with the raw amino-acid sequence, 705 residues long: MMPFGGIAARLQRDRLRAEGVGEHNNAVKYLNQDYEALKQECIESGTLFRDPQFPAGPTALGFKELGPYSSKTRGVEWKRPSELVDDPQFIVGGATRTDICQGALGDCWLLAAIGSLTLNEELLHRVVPHGQSFQEDYAGIFHFQIWQFGEWVDVVVDDLLPTKDGELLFVHSAECTEFWSALLEKAYAKLNGCYESLSGGSTTEGFEDFTGGVAEMYDLKRAPRNMGHIIRKALERGSLLGCSIDITSAFDMEAVTFKKLVKGHAYSVTAFKDVNYRGQQEQLIRIRNPWGQVEWTGAWSDGSSEWDNIDPSDREELQLKMEDGEFWMSFRDFMREFSRLEICNLTPDALTKDELSRWHTQVFEGTWRRGSTAGGCRNNPATFWINPQFKIKLLEEDDDPGDDEVACSFLVALMQKHRRRERRVGGDMHTIGFAVYEVPEEAQGSQNVHLKKDFFLRNQSRARSETFINLREVSNQIRLPPGEYIVVPSTFEPHKEADFILRVFTEKQSDTAELDEEISADLADEEEITEDDIEDGFKNMFQQLAGEDMEISVFELKTILNRVIARHKDLKTDGFSLDSCRNMVNLMDKDGSARLGLVEFQILWNKIRSWLTIFRQYDLDKSGTMSSYEMRMALESAGFKLNNKLHQVVVARYADAETGVDFDNFVCCLVKLETMFRFFHSMDRDGTGTAVMNLAEWLLLTMCG.

A Calpain catalytic domain is found at 48 to 347 (LFRDPQFPAG…FSRLEICNLT (300 aa)). Active-site residues include Cys-108, His-265, and Asn-289. The interval 348 to 517 (PDALTKDELS…KQSDTAELDE (170 aa)) is domain III. Residues 518 to 533 (EISADLADEEEITEDD) are linker. Positions 530–565 (TEDDIEDGFKNMFQQLAGEDMEISVFELKTILNRVI) constitute an EF-hand 1 domain. Residues 534–704 (IEDGFKNMFQ…LAEWLLLTMC (171 aa)) form a domain IV region. Positions 549, 551, 556, 589, 591, 593, 595, 600, 619, 621, 623, 625, and 630 each coordinate Ca(2+). 2 EF-hand domains span residues 606-641 (NKIRSWLTIFRQYDLDKSGTMSSYEMRMALESAGFK) and 671-705 (VKLETMFRFFHSMDRDGTGTAVMNLAEWLLLTMCG).

It belongs to the peptidase C2 family. In terms of assembly, heterodimer of large (catalytic) and a small (regulatory) subunit. It depends on Ca(2+) as a cofactor. The N-terminus is blocked. As to expression, ubiquitously expressed.

The protein resides in the cytoplasm. It is found in the cell membrane. The catalysed reaction is Broad endopeptidase specificity.. Activated by micromolar concentrations of calcium and inhibited by calpastatin. Calcium-regulated non-lysosomal thiol-protease which catalyze limited proteolysis of substrates involved in cytoskeletal remodeling and signal transduction. The sequence is that of Calpain-1 catalytic subunit from Gallus gallus (Chicken).